The primary structure comprises 187 residues: Peptidyl-tRNA hydrolase (187 aa).

Residue Tyr14 participates in tRNA binding. The Proton acceptor role is filled by His19. Tyr63 and Asn65 together coordinate tRNA.

It belongs to the PTH family. In terms of assembly, monomer.

It localises to the cytoplasm. It carries out the reaction an N-acyl-L-alpha-aminoacyl-tRNA + H2O = an N-acyl-L-amino acid + a tRNA + H(+). Hydrolyzes ribosome-free peptidyl-tRNAs (with 1 or more amino acids incorporated), which drop off the ribosome during protein synthesis, or as a result of ribosome stalling. Its function is as follows. Catalyzes the release of premature peptidyl moieties from peptidyl-tRNA molecules trapped in stalled 50S ribosomal subunits, and thus maintains levels of free tRNAs and 50S ribosomes. This chain is Peptidyl-tRNA hydrolase, found in Thermodesulfovibrio yellowstonii (strain ATCC 51303 / DSM 11347 / YP87).